Reading from the N-terminus, the 216-residue chain is Ras-related protein RABE1a (216 aa).

GTP is bound at residue 22 to 29 (GDSGVGKS). An Effector region motif is present at residues 44–52 (FITTIGIDF). Residues 70–74 (DTAGQ), 128–131 (NKAD), and 159–160 (SA) each bind GTP. The interval 185–216 (DARAEPQTIKINQSDQGAGTSQATQKSACCGT) is disordered. Positions 193–216 (IKINQSDQGAGTSQATQKSACCGT) are enriched in polar residues. S-geranylgeranyl cysteine attachment occurs at residues Cys213 and Cys214.

It belongs to the small GTPase superfamily. Rab family. As to quaternary structure, interacts with PI5K2.

It is found in the golgi apparatus membrane. The protein localises to the cell membrane. Involved in membrane trafficking from the Golgi to the plasma membrane. The polypeptide is Ras-related protein RABE1a (RABE1A) (Arabidopsis thaliana (Mouse-ear cress)).